A 91-amino-acid polypeptide reads, in one-letter code: Acylphosphatase (91 aa).

Positions 3–91 (TVTMKVTGLV…EKFTRFSVVY (89 aa)) constitute an Acylphosphatase-like domain. Residues R18 and N36 contribute to the active site.

The protein belongs to the acylphosphatase family.

The catalysed reaction is an acyl phosphate + H2O = a carboxylate + phosphate + H(+). The chain is Acylphosphatase (acyP) from Lactobacillus gasseri (strain ATCC 33323 / DSM 20243 / BCRC 14619 / CIP 102991 / JCM 1131 / KCTC 3163 / NCIMB 11718 / NCTC 13722 / AM63).